We begin with the raw amino-acid sequence, 2253 residues long: Genome polyprotein (2253 aa).

A disulfide bridge links Cys-627 with Cys-694. Positions 750–752 (RVD) match the Cell attachment site motif. One can recognise an LRAT domain in the interval 825–920 (LVYKNRGFYK…LFPGRKEITQ (96 aa)). Active-site for protein 2A H-NC residues include His-835 and His-846. Cys-904 (for protein 2A H-NC; Acyl-thioester intermediate) is an active-site residue. A helical membrane pass occupies residues 1002–1022 (IVLYCHAPNMLTTMCLGTLLV). The SF3 helicase domain occupies 1205–1366 (YSEMMRVNVR…ASYSRNNKLD (162 aa)). Residue Tyr-1559 is modified to O-(5'-phospho-RNA)-tyrosine. The 190-residue stretch at 1586 to 1775 (APYMQDLEHC…RAAAVHFISN (190 aa)) folds into the Peptidase C3 domain. Catalysis depends on for protease 3C activity residues His-1626, Asp-1664, and Cys-1739. Cys-1970 acts as the Acyl-thioester intermediate in catalysis. In terms of domain architecture, RdRp catalytic spans 2018-2132 (PYNYGLDYSS…SVSSPLDAEY (115 aa)). The Mg(2+) site is built by Asp-2024 and Asp-2118.

The protein belongs to the picornaviruses polyprotein family. As to quaternary structure, interacts with capsid protein VP1 and capsid protein VP3 to form heterotrimeric protomers. Five protomers subsequently associate to form pentamers which serve as building blocks for the capsid. Interacts with capsid protein VP0, and capsid protein VP3 to form heterotrimeric protomers. Five protomers subsequently associate to form pentamers which serve as building blocks for the capsid. In terms of assembly, interacts with capsid protein VP0 and capsid protein VP1 to form heterotrimeric protomers. Five protomers subsequently associate to form pentamers which serve as building blocks for the capsid. As to quaternary structure, homohexamer; forms a hexameric ring structure with 6-fold symmetry characteristic of AAA+ ATPases. Homodimer. Interacts with host ACBD3. In terms of assembly, interacts with RNA-directed RNA polymerase. As to quaternary structure, interacts with Viral protein genome-linked. Requires Mg(2+) as cofactor. Post-translationally, VPg is uridylylated by the polymerase and is covalently linked to the 5'-end of genomic RNA. This uridylylated form acts as a nucleotide-peptide primer for the polymerase. In terms of processing, specific enzymatic cleavages yield mature proteins. All cleavages are catalyzed by P3C.

It is found in the virion. It localises to the host cytoplasm. Its subcellular location is the host nucleus. The protein localises to the host nucleolus. The protein resides in the host cytoplasmic vesicle membrane. It is found in the host endoplasmic reticulum membrane. It localises to the host Golgi apparatus membrane. It carries out the reaction RNA(n) + a ribonucleoside 5'-triphosphate = RNA(n+1) + diphosphate. It catalyses the reaction a ribonucleoside 5'-triphosphate + H2O = a ribonucleoside 5'-diphosphate + phosphate + H(+). The catalysed reaction is Selective cleavage of Gln-|-Gly bond in the poliovirus polyprotein. In other picornavirus reactions Glu may be substituted for Gln, and Ser or Thr for Gly.. Forms an icosahedral capsid of pseudo T=3 symmetry together with capsid proteins VP1 and VP3. The capsid is 300 Angstroms in diameter, composed of 60 copies of each capsid protein and enclosing the viral positive strand RNA genome. The attachment to the host cell receptor induces virion internalization predominantly through clathrin-mediated endocytosis. Binds packaging signals present in the viral RNA. Its function is as follows. Forms an icosahedral capsid of pseudo T=3 symmetry together with capsid proteins VP0 and VP1. The capsid is 300 Angstroms in diameter, composed of 60 copies of each capsid protein and enclosing the viral positive strand RNA genome. The attachment to the host cell receptor induces virion internalization predominantly through clathrin-mediated endocytosis. Binds packaging signals present in the viral RNA. Functionally, forms an icosahedral capsid of pseudo T=3 symmetry together with capsid proteins VP0 and VP3. The capsid is 300 Angstroms in diameter, composed of 60 copies of each capsid protein and enclosing the viral positive strand RNA genome. The attachment to the host cell receptor induces virion internalization predominantly through clathrin-mediated endocytosis. Binds packaging signals present in the viral RNA. In terms of biological role, mediates self-processing of the polyprotein by a translational effect termed 'ribosome skipping'. Mechanistically, 2A1-mediated cleavage occurs between the C-terminal glycine and the proline of the downstream protein 2A2. Plays an essential role in the virus replication cycle by acting as a viroporin. Creates a pore in the host endoplasmic reticulum and as a consequence releases Ca2+ in the cytoplasm of infected cell. In turn, high levels of cytoplasmic calcium may trigger membrane trafficking and transport of viral ER-associated proteins to viroplasms, sites of viral genome replication. Its function is as follows. Induces and associates with structural rearrangements of intracellular membranes. Displays RNA-binding, nucleotide binding and NTPase activities. May play a role in virion morphogenesis and viral RNA encapsidation by interacting with the capsid protein VP3. Functionally, localizes the viral replication complex to the surface of membranous vesicles. It inhibits host cell endoplasmic reticulum-to-Golgi apparatus transport and causes the disassembly of the Golgi complex, possibly through GBF1 interaction. This would result in depletion of MHC, trail receptors and IFN receptors at the host cell surface. Plays an essential role in viral RNA replication by recruiting ACBD3 and PI4KB at the viral replication sites, thereby allowing the formation of the rearranged membranous structures where viral replication takes place. In terms of biological role, acts as a primer for viral RNA replication and remains covalently bound to viral genomic RNA. VPg is uridylylated prior to priming replication into VPg-pUpU. The VPg-pUpU is then used as primer on the genomic RNA poly(A) by the RNA-dependent RNA polymerase to replicate the viral genome. Following genome release from the infecting virion in the cytoplasm, the VPg-RNA linkage is probably removed by host TDP2. During the late stage of the replication cycle, host TDP2 is excluded from sites of viral RNA synthesis and encapsidation, allowing for the generation of progeny virions. Cysteine protease that generates mature viral proteins from the precursor polyprotein. In addition to its proteolytic activity, it binds to viral RNA, and thus influences viral genome replication. RNA and substrate bind cooperatively to the protease. Its function is as follows. Replicates the viral genomic RNA on the surface of intracellular membranes. Covalently attaches UMP to a tyrosine of VPg, which is used to prime RNA synthesis. The positive stranded RNA genome is first replicated at virus induced membranous vesicles, creating a dsRNA genomic replication form. This dsRNA is then used as template to synthesize positive stranded RNA genomes. ss(+)RNA genomes are either translated, replicated or encapsidated. The sequence is that of Genome polyprotein from Ljunganvirus 1 (LV).